Here is a 140-residue protein sequence, read N- to C-terminus: Cytochrome c oxidase subunit 6, mitochondrial (140 aa).

Belongs to the cytochrome c oxidase subunit 5A family. As to quaternary structure, component of the cytochrome c oxidase (complex IV, CIV), a multisubunit enzyme composed of a catalytic core of 3 subunits and several supernumerary subunits. The complex exists as a monomer or a dimer and forms supercomplexes (SCs) in the inner mitochondrial membrane with ubiquinol-cytochrome c oxidoreductase (cytochrome b-c1 complex, complex III, CIII).

The protein resides in the mitochondrion inner membrane. The protein operates within energy metabolism; oxidative phosphorylation. Functionally, component of the cytochrome c oxidase, the last enzyme in the mitochondrial electron transport chain which drives oxidative phosphorylation. The respiratory chain contains 3 multisubunit complexes succinate dehydrogenase (complex II, CII), ubiquinol-cytochrome c oxidoreductase (cytochrome b-c1 complex, complex III, CIII) and cytochrome c oxidase (complex IV, CIV), that cooperate to transfer electrons derived from NADH and succinate to molecular oxygen, creating an electrochemical gradient over the inner membrane that drives transmembrane transport and the ATP synthase. Cytochrome c oxidase is the component of the respiratory chain that catalyzes the reduction of oxygen to water. Electrons originating from reduced cytochrome c in the intermembrane space (IMS) are transferred via the dinuclear copper A center (CU(A)) of subunit 2 and heme A of subunit 1 to the active site in subunit 1, a binuclear center (BNC) formed by heme A3 and copper B (CU(B)). The BNC reduces molecular oxygen to 2 water molecules using 4 electrons from cytochrome c in the IMS and 4 protons from the mitochondrial matrix. This chain is Cytochrome c oxidase subunit 6, mitochondrial (cox6), found in Schizosaccharomyces pombe (strain 972 / ATCC 24843) (Fission yeast).